Here is a 149-residue protein sequence, read N- to C-terminus: D-aminoacyl-tRNA deacylase (149 aa).

The Gly-cisPro motif, important for rejection of L-amino acids motif lies at 137-138; that stretch reads GP.

The protein belongs to the DTD family. As to quaternary structure, homodimer.

Its subcellular location is the cytoplasm. The catalysed reaction is glycyl-tRNA(Ala) + H2O = tRNA(Ala) + glycine + H(+). It catalyses the reaction a D-aminoacyl-tRNA + H2O = a tRNA + a D-alpha-amino acid + H(+). Its function is as follows. An aminoacyl-tRNA editing enzyme that deacylates mischarged D-aminoacyl-tRNAs. Also deacylates mischarged glycyl-tRNA(Ala), protecting cells against glycine mischarging by AlaRS. Acts via tRNA-based rather than protein-based catalysis; rejects L-amino acids rather than detecting D-amino acids in the active site. By recycling D-aminoacyl-tRNA to D-amino acids and free tRNA molecules, this enzyme counteracts the toxicity associated with the formation of D-aminoacyl-tRNA entities in vivo and helps enforce protein L-homochirality. This Desulfotalea psychrophila (strain LSv54 / DSM 12343) protein is D-aminoacyl-tRNA deacylase.